The sequence spans 140 residues: Nucleoside diphosphate kinase (140 aa).

The ATP site is built by Lys11, Phe59, Arg87, Thr93, Arg104, and Asn114. The Pros-phosphohistidine intermediate role is filled by His117.

The protein belongs to the NDK family. As to quaternary structure, homotetramer. Mg(2+) is required as a cofactor.

Its subcellular location is the cytoplasm. The enzyme catalyses a 2'-deoxyribonucleoside 5'-diphosphate + ATP = a 2'-deoxyribonucleoside 5'-triphosphate + ADP. The catalysed reaction is a ribonucleoside 5'-diphosphate + ATP = a ribonucleoside 5'-triphosphate + ADP. Its function is as follows. Major role in the synthesis of nucleoside triphosphates other than ATP. The ATP gamma phosphate is transferred to the NDP beta phosphate via a ping-pong mechanism, using a phosphorylated active-site intermediate. The polypeptide is Nucleoside diphosphate kinase (Rhodovulum sulfidophilum (Rhodobacter sulfidophilus)).